The chain runs to 109 residues: Heterogeneous nuclear ribonucleoprotein-like protein HD40 (109 aa).

The disordered stretch occupies residues 1–36; that stretch reads EEVSNGQEHTEGMXQGEXNXIXVEEHHEGEKNSHLV. Over residues 23–36 the composition is skewed to basic and acidic residues; it reads VEEHHEGEKNSHLV. One can recognise an RRM domain in the interval 40-50; that stretch reads EEKKLFVGALS. Arg102 and Arg105 each carry asymmetric dimethylarginine.

Its subcellular location is the cytoplasm. The protein localises to the nucleus. The sequence is that of Heterogeneous nuclear ribonucleoprotein-like protein HD40 from Artemia salina (Brine shrimp).